A 144-amino-acid polypeptide reads, in one-letter code: Maximins 3/H11 type 2 (144 aa).

A signal peptide spans 1–18 (MHFKYIVAVSFLIASAYA). 2 consecutive propeptides follow at residues 19–43 (RSVQ…REIR) and 73–122 (RTAE…KKEK). Isoleucine amide is present on isoleucine 143.

It belongs to the bombinin family. As to expression, expressed by the skin glands.

The protein resides in the secreted. In terms of biological role, maximin-3 shows antibacterial activity against both Gram-positive and Gram-negative bacteria. It also shows antimicrobial activity against the fungus C.albicans, but not against A.flavus nor P.uticale. It has little hemolytic activity. It possess a significant cytotoxicity against tumor cell lines. It possess a significant anti-HIV activity. It shows high spermicidal activity. Its function is as follows. Maximin-H11 shows antimicrobial activity against bacteria and against the fungus C.albicans. Shows strong hemolytic activity. The protein is Maximins 3/H11 type 2 of Bombina maxima (Giant fire-bellied toad).